The sequence spans 117 residues: LYR motif-containing protein 1 (117 aa).

The protein belongs to the complex I LYR family.

This Dictyostelium discoideum (Social amoeba) protein is LYR motif-containing protein 1 (lyrm1).